The chain runs to 1073 residues: Activated Cdc42 kinase Ack (1073 aa).

Positions 88–110 (IGGGKQPSSKKQSSAARESSQGN) are disordered. The Protein kinase domain occupies 123 to 383 (ITMGLKLGDG…PTFAALKEYL (261 aa)). Residues 129 to 137 (LGDGSFGVV) and lysine 156 contribute to the ATP site. Aspartate 250 serves as the catalytic Proton acceptor. In terms of domain architecture, SH3 spans 386 to 446 (MSPPVMRASR…PRNLLEQRKV (61 aa)). 3 disordered regions span residues 484 to 506 (QRKC…SSKQ), 803 to 834 (PLKN…VEAA), and 862 to 882 (AQPP…HQQQ). The span at 812 to 826 (SVHSNHSSPSSTASP) shows a compositional bias: low complexity. One can recognise a UBA domain in the interval 1029–1072 (GLATRHYKIDQLARLGVAGRPQCEQALQQTNWSLEVAAELLLNA).

Belongs to the protein kinase superfamily. Tyr protein kinase family. In terms of assembly, interacts with yki and ex. Interacts with drk. Likely to be a member of an axonal guidance receptor complex that includes SH3PX1, dock and Dscam. Interacts (via N-terminus) with dock. Interacts with SH3PX1 (via SH3 domain). The cofactor is Mg(2+). In terms of processing, phosphorylated. Autophosphorylated. Detected in ovaries (at protein level). In adults, relatively higher expression in the head compared to the body.

Its subcellular location is the cytoplasm. It is found in the cytoplasmic vesicle. The protein localises to the clathrin-coated vesicle. The catalysed reaction is L-tyrosyl-[protein] + ATP = O-phospho-L-tyrosyl-[protein] + ADP + H(+). It catalyses the reaction L-threonyl-[protein] + ATP = O-phospho-L-threonyl-[protein] + ADP + H(+). Non-receptor tyrosine-protein and serine/threonine-protein kinase that is implicated in diverse biological functions such as cell survival, cell differentiation, cell growth and proliferation. Phosphorylates SH3PX1 and ex. Phosphorylates SH3PX1 predominantly on 'Tyr-56', which likely promotes the recruitment of SH3PX1 to an axonal guidance receptor complex that includes dock and Dscam; because phosphorylation of SH3PX1 increases its interaction with the complex member dock while decreasing its interaction with the actin cytoskeleton modulator WASp. In the wing and eye, promotes tissue growth, and during embryogenesis coordinates cell shape changes required for correct dorsal closure. Functions in the negative regulation of the Hippo/SWH (Sav/Wts/Hpo) signaling pathway by enhancing yki activity thereby promoting cell proliferation and inhibiting apoptosis. This is accomplished, at least in part, by phosphorylating ex thereby reducing its ability to efficiently activate the Hippo signaling cascade. In the eye disk, wing disk and possibly spermatids, inhibits programmed cell death induced by hid and rpr through a mechanism that is independent of the MAP kinase signal transduction pathway. Essential for male and female fertility. During oogenesis required for the correct temporal assembly, and consequently the catalytic activity of long Ctps filaments (cytoophidium) in the germline nurse cells, likely by phosphorylating an unidentified substrate that is essential for linking individual Ctps filaments into large, catalytically active assemblies. The chain is Activated Cdc42 kinase Ack from Drosophila melanogaster (Fruit fly).